The sequence spans 143 residues: MELRYLRYFVAVARERHFTRAAKALGISQPPLSQQIKRLEEEVGTPLFRRLTRGVELTEAGEAFYEDACKILALSDAALEKARGIARGLNGNLSIGITSSDAFHPKIFALIRQFQVQNMAVQVHQVEANMSSLTAMLAEGELD.

One can recognise an HTH lysR-type domain in the interval 1–58 (MELRYLRYFVAVARERHFTRAAKALGISQPPLSQQIKRLEEEVGTPLFRRLTRGVELT). Residues 18 to 37 (FTRAAKALGISQPPLSQQIK) constitute a DNA-binding region (H-T-H motif).

The protein belongs to the LysR transcriptional regulatory family.

Functionally, regulator of the budABC operon for 2,3-butanediol synthesis. In Klebsiella aerogenes (Enterobacter aerogenes), this protein is HTH-type transcriptional regulator BudR (budR).